An 88-amino-acid chain; its full sequence is Large ribosomal subunit protein bL31B (88 aa).

Belongs to the bacterial ribosomal protein bL31 family. Type B subfamily. As to quaternary structure, part of the 50S ribosomal subunit.

The polypeptide is Large ribosomal subunit protein bL31B (Paraburkholderia phytofirmans (strain DSM 17436 / LMG 22146 / PsJN) (Burkholderia phytofirmans)).